Reading from the N-terminus, the 157-residue chain is Mediator of RNA polymerase II transcription subunit 22 (157 aa).

The protein belongs to the Mediator complex subunit 22 family. In terms of assembly, component of the Mediator complex.

The protein localises to the nucleus. In terms of biological role, component of the Mediator complex, a coactivator involved in the regulated transcription of nearly all RNA polymerase II-dependent genes. Mediator functions as a bridge to convey information from gene-specific regulatory proteins to the basal RNA polymerase II transcription machinery. Mediator is recruited to promoters by direct interactions with regulatory proteins and serves as a scaffold for the assembly of a functional preinitiation complex with RNA polymerase II and the general transcription factors. The sequence is that of Mediator of RNA polymerase II transcription subunit 22 (mdt-22) from Caenorhabditis elegans.